Consider the following 323-residue polypeptide: Deaminated glutathione amidase (323 aa).

A mitochondrion-targeting transit peptide spans 1–33 (MLGFITRPPHQLLCTGYRLLRTPVLCTQPRPRT). The 253-residue stretch at 42–294 (LPLVAVCQVT…PGLCLARIDL (253 aa)) folds into the CN hydrolase domain. Residue Glu-82 is the Proton acceptor of the active site. The Proton donor role is filled by Lys-157. Residue Cys-199 is the Nucleophile of the active site.

Belongs to the carbon-nitrogen hydrolase superfamily. NIT1/NIT2 family. In terms of tissue distribution, expressed in most tissues with higher expression in adult liver and kidney as well as in fetal adrenal gland and skeletal muscle.

The protein resides in the mitochondrion. It is found in the cytoplasm. It catalyses the reaction N-(4-oxoglutaryl)-L-cysteinylglycine + H2O = L-cysteinylglycine + 2-oxoglutarate. The enzyme catalyses N-(4-carboxy-4-oxobutanoyl)-L-ethylglycylglycine + H2O = N-(2-aminobutanoyl)glycine + 2-oxoglutarate. In terms of biological role, catalyzes the hydrolysis of the amide bond in N-(4-oxoglutarate)-L-cysteinylglycine (deaminated glutathione), a metabolite repair reaction to dispose of the harmful deaminated glutathione. Possesses amidase activity toward deaminated ophthalmate in vitro. Plays a role in cell growth and apoptosis: loss of expression promotes cell growth, resistance to DNA damage stress and increased incidence to NMBA-induced tumors. Has tumor suppressor properties that enhances the apoptotic responsiveness in cancer cells; this effect is additive to the tumor suppressor activity of FHIT. It is also a negative regulator of primary T-cells. This is Deaminated glutathione amidase from Mus musculus (Mouse).